Reading from the N-terminus, the 361-residue chain is Methionine import ATP-binding protein MetN (361 aa).

An ABC transporter domain is found at 22–257; sequence VRLIDVKRRF…PQTDITRSLL (236 aa). Residue 54–61 coordinates ATP; sequence GRSGAGKS.

Belongs to the ABC transporter superfamily. Methionine importer (TC 3.A.1.24) family. The complex is composed of two ATP-binding proteins (MetN), two transmembrane proteins (MetI) and a solute-binding protein (MetQ).

It is found in the cell inner membrane. It carries out the reaction L-methionine(out) + ATP + H2O = L-methionine(in) + ADP + phosphate + H(+). It catalyses the reaction D-methionine(out) + ATP + H2O = D-methionine(in) + ADP + phosphate + H(+). In terms of biological role, part of the ABC transporter complex MetNIQ involved in methionine import. Responsible for energy coupling to the transport system. The protein is Methionine import ATP-binding protein MetN of Rhizobium etli (strain ATCC 51251 / DSM 11541 / JCM 21823 / NBRC 15573 / CFN 42).